The chain runs to 197 residues: Holliday junction branch migration complex subunit RuvA (197 aa).

Positions 1-64 (MYEYIKGKYI…EDFIGVYGFL (64 aa)) are domain I. Residues 65–144 (TKDELSMFKL…DILEEDDEQI (80 aa)) form a domain II region. The tract at residues 145 to 149 (INKVA) is flexible linker. Positions 149-197 (ADDKKVLEAVAALVTLGYSEKEANKVINSCDKNNSLEQIIKEALKYLMK) are domain III.

The protein belongs to the RuvA family. In terms of assembly, homotetramer. Forms an RuvA(8)-RuvB(12)-Holliday junction (HJ) complex. HJ DNA is sandwiched between 2 RuvA tetramers; dsDNA enters through RuvA and exits via RuvB. An RuvB hexamer assembles on each DNA strand where it exits the tetramer. Each RuvB hexamer is contacted by two RuvA subunits (via domain III) on 2 adjacent RuvB subunits; this complex drives branch migration. In the full resolvosome a probable DNA-RuvA(4)-RuvB(12)-RuvC(2) complex forms which resolves the HJ.

It is found in the cytoplasm. In terms of biological role, the RuvA-RuvB-RuvC complex processes Holliday junction (HJ) DNA during genetic recombination and DNA repair, while the RuvA-RuvB complex plays an important role in the rescue of blocked DNA replication forks via replication fork reversal (RFR). RuvA specifically binds to HJ cruciform DNA, conferring on it an open structure. The RuvB hexamer acts as an ATP-dependent pump, pulling dsDNA into and through the RuvAB complex. HJ branch migration allows RuvC to scan DNA until it finds its consensus sequence, where it cleaves and resolves the cruciform DNA. This chain is Holliday junction branch migration complex subunit RuvA, found in Clostridium botulinum (strain ATCC 19397 / Type A).